The primary structure comprises 539 residues: Chaperonin GroEL 1 (539 aa).

ATP is bound by residues 29–32 (TLGP), 86–90 (DGTTT), glycine 413, 478–480 (NAA), and aspartate 494. Residues 520-539 (IVDKPAEPEDDGHGHHGHAH) form a disordered region. Positions 523-533 (KPAEPEDDGHG) are enriched in basic and acidic residues.

This sequence belongs to the chaperonin (HSP60) family. In terms of assembly, forms a cylinder of 14 subunits composed of two heptameric rings stacked back-to-back. Interacts with the co-chaperonin GroES.

It localises to the cytoplasm. The catalysed reaction is ATP + H2O + a folded polypeptide = ADP + phosphate + an unfolded polypeptide.. Functionally, together with its co-chaperonin GroES, plays an essential role in assisting protein folding. The GroEL-GroES system forms a nano-cage that allows encapsulation of the non-native substrate proteins and provides a physical environment optimized to promote and accelerate protein folding. The protein is Chaperonin GroEL 1 of Mycobacterium ulcerans (strain Agy99).